The following is a 257-amino-acid chain: UPF0246 protein YaaA (257 aa).

This sequence belongs to the UPF0246 family.

The sequence is that of UPF0246 protein YaaA from Salmonella agona (strain SL483).